We begin with the raw amino-acid sequence, 98 residues long: Integration host factor subunit alpha (98 aa).

Positions D53 to E69 are enriched in basic and acidic residues. The segment at D53–I73 is disordered.

It belongs to the bacterial histone-like protein family. As to quaternary structure, heterodimer of an alpha and a beta chain.

In terms of biological role, this protein is one of the two subunits of integration host factor, a specific DNA-binding protein that functions in genetic recombination as well as in transcriptional and translational control. The sequence is that of Integration host factor subunit alpha from Aliivibrio fischeri (strain ATCC 700601 / ES114) (Vibrio fischeri).